Consider the following 96-residue polypeptide: MITPYNILRHELIGLDVEITQSTNKSLVGLKGKIVYETRNTINIERFDNSKEVMIPKDIAVFKFKLNEEYIEVIGELLMGRPEDRLKRKIKNIYPY.

Belongs to the eukaryotic/archaeal RNase P protein component 1 family. Consists of a catalytic RNA component and at least 4-5 protein subunits.

It is found in the cytoplasm. The catalysed reaction is Endonucleolytic cleavage of RNA, removing 5'-extranucleotides from tRNA precursor.. Its function is as follows. Part of ribonuclease P, a protein complex that generates mature tRNA molecules by cleaving their 5'-ends. The polypeptide is Ribonuclease P protein component 1 (Methanococcus aeolicus (strain ATCC BAA-1280 / DSM 17508 / OCM 812 / Nankai-3)).